Reading from the N-terminus, the 174-residue chain is Protein FanG (174 aa).

The N-terminal stretch at 1-21 is a signal peptide; sequence MKKLYKAITVICILMSNLQSA. Cysteine 41 and cysteine 75 form a disulfide bridge.

The protein resides in the fimbrium. Involved in the biosynthesis of K99 fimbriae. In Escherichia coli, this protein is Protein FanG (fanG).